The following is a 337-amino-acid chain: Anthranilate phosphoribosyltransferase (337 aa).

5-phospho-alpha-D-ribose 1-diphosphate contacts are provided by residues glycine 81, 84–85 (GD), serine 89, 91–94 (NVST), 109–117 (KHGNRALSS), and alanine 121. Glycine 81 contacts anthranilate. Residue serine 93 coordinates Mg(2+). Asparagine 112 serves as a coordination point for anthranilate. Arginine 167 contributes to the anthranilate binding site. Aspartate 226 and glutamate 227 together coordinate Mg(2+).

It belongs to the anthranilate phosphoribosyltransferase family. As to quaternary structure, homodimer. Mg(2+) serves as cofactor.

It carries out the reaction N-(5-phospho-beta-D-ribosyl)anthranilate + diphosphate = 5-phospho-alpha-D-ribose 1-diphosphate + anthranilate. It participates in amino-acid biosynthesis; L-tryptophan biosynthesis; L-tryptophan from chorismate: step 2/5. Catalyzes the transfer of the phosphoribosyl group of 5-phosphorylribose-1-pyrophosphate (PRPP) to anthranilate to yield N-(5'-phosphoribosyl)-anthranilate (PRA). The chain is Anthranilate phosphoribosyltransferase from Bradyrhizobium sp. (strain ORS 278).